Consider the following 873-residue polypeptide: uncharacterized protein (873 aa).

Disordered regions lie at residues 1–24, 175–251, 375–423, 506–540, 568–592, 662–773, and 822–855; these read MSNK…SMSK, SSAV…TSIS, PSRH…AKKP, DSES…ATRS, DQSS…APEY, ANDS…TSQI, and ANPY…EEPI. A compositionally biased stretch (basic and acidic residues) spans 211–225; that stretch reads KDSDRSQTKNTHEET. Over residues 376-385 the composition is skewed to basic residues; sequence SRHHSHRKKE. Residues 574–586 are compositionally biased toward basic residues; sequence PGRHFGKTGRSHF. Over residues 665–686 the composition is skewed to low complexity; the sequence is SPNSSESLESLNNQSYSSSPYS. Residues 698–740 show a composition bias toward polar residues; the sequence is QSLNDSPQTSDFKASNLNDSSSNVHSIFQTRETTSPSVQNKTP. Residues 743-755 are compositionally biased toward basic and acidic residues; the sequence is YHRELKSSKDGHE. Residues 758-773 show a composition bias toward low complexity; it reads SPLVSSSPSGSFTSQI. The segment covering 823-855 has biased composition (polar residues); it reads NPYSTNNDGNPSNNTSDVEVNETSMNDNSEEPI.

The protein resides in the cytoplasm. Its subcellular location is the vacuole membrane. This is an uncharacterized protein from Schizosaccharomyces pombe (strain 972 / ATCC 24843) (Fission yeast).